A 357-amino-acid polypeptide reads, in one-letter code: Protein RecA (357 aa).

79-86 lines the ATP pocket; sequence GPESSGKT.

It belongs to the RecA family.

The protein localises to the cytoplasm. In terms of biological role, can catalyze the hydrolysis of ATP in the presence of single-stranded DNA, the ATP-dependent uptake of single-stranded DNA by duplex DNA, and the ATP-dependent hybridization of homologous single-stranded DNAs. It interacts with LexA causing its activation and leading to its autocatalytic cleavage. The polypeptide is Protein RecA (Chloroherpeton thalassium (strain ATCC 35110 / GB-78)).